Here is a 387-residue protein sequence, read N- to C-terminus: MTQETYPSCSFPAHPRSWVEIDGRALRFNIRVARERIPKKTKIIAVVKSEAYGHGLIPIAKELVHSGVEVLGINNIDEAIELRQAGIRSALLILCPILPSEASIIVSYNVGVVISSYNEAKWLSQAAERQGKKAIVHIKIDTGMGRLGFIPSQFIQEMEKIKRLSSLSIAAICTHFSQAETDIEATEKQWLELLKFRHYFKGLPIHVANSAALWRKSVYACDYVRIGLALYGIAPMPFLRRFLKPILTWKCKIVLIKELPRGHPISYGATYKLKKPSRIAVLSVGYGDGYCRSLSNKASVLIKGKRCPVRGAITMNLLMVDITDLPSCKVGDEAVLLGTQGKESITADELAKLSQTISYEIITNIHSHIRRNYRHFLSHSNELSLYE.

The Proton acceptor; specific for D-alanine role is filled by lysine 48. Lysine 48 is modified (N6-(pyridoxal phosphate)lysine). Arginine 146 contributes to the substrate binding site. Tyrosine 267 functions as the Proton acceptor; specific for L-alanine in the catalytic mechanism. Methionine 315 contacts substrate.

This sequence belongs to the alanine racemase family. Pyridoxal 5'-phosphate is required as a cofactor.

The catalysed reaction is L-alanine = D-alanine. It participates in amino-acid biosynthesis; D-alanine biosynthesis; D-alanine from L-alanine: step 1/1. Its function is as follows. Catalyzes the interconversion of L-alanine and D-alanine. May also act on other amino acids. This chain is Alanine racemase (alr), found in Methylacidiphilum infernorum (isolate V4) (Methylokorus infernorum (strain V4)).